The chain runs to 243 residues: Protein-L-isoaspartate O-methyltransferase (243 aa).

Ser-87 is an active-site residue.

This sequence belongs to the methyltransferase superfamily. L-isoaspartyl/D-aspartyl protein methyltransferase family.

The protein localises to the cytoplasm. It carries out the reaction [protein]-L-isoaspartate + S-adenosyl-L-methionine = [protein]-L-isoaspartate alpha-methyl ester + S-adenosyl-L-homocysteine. Catalyzes the methyl esterification of L-isoaspartyl residues in peptides and proteins that result from spontaneous decomposition of normal L-aspartyl and L-asparaginyl residues. It plays a role in the repair and/or degradation of damaged proteins. This chain is Protein-L-isoaspartate O-methyltransferase, found in Methanosarcina mazei (strain ATCC BAA-159 / DSM 3647 / Goe1 / Go1 / JCM 11833 / OCM 88) (Methanosarcina frisia).